We begin with the raw amino-acid sequence, 260 residues long: Large ribosomal subunit protein uL2 (260 aa).

The interval glutamate 208 to serine 230 is disordered.

The protein belongs to the universal ribosomal protein uL2 family.

Its subcellular location is the cytoplasm. This chain is Large ribosomal subunit protein uL2, found in Caenorhabditis elegans.